A 606-amino-acid polypeptide reads, in one-letter code: Serine/threonine-protein kinase A-Raf (606 aa).

The RBD domain occupies 19-91; that stretch reads GTVKVYLPNK…DGEELIVEVL (73 aa). A Phorbol-ester/DAG-type zinc finger spans residues 98–144; sequence MHNFVRKTFFSLAFCDFCLKFLFHGFRCQTCGYKFHQHCSSKVPTVC. The Zn(2+) site is built by H99, C112, C115, C125, C128, H133, C136, and C144. S157 and S162 each carry phosphoserine. Positions 160–207 are disordered; it reads DLSGGSRQHEAPSNRPLNELLTPQGPSPRTQHCDPEHFPFPAPANAPL. T181 is modified (phosphothreonine). A phosphoserine mark is found at S186 and S214. The disordered stretch occupies residues 240-290; that stretch reads STDAAGSRGGSDGTPRGSPSPASVSSGRKSPHSKSPAEQRERKSLADDKKK. A Phosphothreonine modification is found at T253. Phosphoserine occurs at positions 257 and 269. A compositionally biased stretch (basic and acidic residues) spans 274-289; the sequence is SPAEQRERKSLADDKK. Positions 310–570 constitute a Protein kinase domain; it reads VQLLKRIGTG…PQILATIELL (261 aa). ATP contacts are provided by residues 316–324 and K336; that span reads IGTGSFGTV. The residue at position 318 (T318) is a Phosphothreonine. The active-site Proton acceptor is the D429.

It belongs to the protein kinase superfamily. TKL Ser/Thr protein kinase family. RAF subfamily. In terms of assembly, interacts with TH1L/NELFD. Requires Zn(2+) as cofactor. In terms of processing, dephosphorylation of Ser-214 by the SHOC2-MRAS-PP1c (SMP) complex consisting of SHOC2, GTP-bound M-Ras/MRAS and the catalytic subunit of protein phosphatase 1 (PPP1CA, PPP1CB or PPP1CC); this relieves inactivation and stimulates kinase activity. Predominantly in urogenital tissues.

The catalysed reaction is L-seryl-[protein] + ATP = O-phospho-L-seryl-[protein] + ADP + H(+). The enzyme catalyses L-threonyl-[protein] + ATP = O-phospho-L-threonyl-[protein] + ADP + H(+). Functionally, involved in the transduction of mitogenic signals from the cell membrane to the nucleus. May also regulate the TOR signaling cascade. Phosphorylates PFKFB2. Serves as a positive regulator of myogenic differentiation by inducing cell cycle arrest, the expression of myogenin and other muscle-specific proteins, and myotube formation. In Homo sapiens (Human), this protein is Serine/threonine-protein kinase A-Raf (ARAF).